The sequence spans 93 residues: Small ribosomal subunit protein uS15 (93 aa).

It belongs to the universal ribosomal protein uS15 family. As to quaternary structure, part of the 30S ribosomal subunit. Forms a bridge to the 50S subunit in the 70S ribosome, contacting the 23S rRNA.

In terms of biological role, one of the primary rRNA binding proteins, it binds directly to 16S rRNA where it helps nucleate assembly of the platform of the 30S subunit by binding and bridging several RNA helices of the 16S rRNA. Functionally, forms an intersubunit bridge (bridge B4) with the 23S rRNA of the 50S subunit in the ribosome. The protein is Small ribosomal subunit protein uS15 of Ehrlichia canis (strain Jake).